Consider the following 274-residue polypeptide: 23S rRNA (adenosine(1067)-2'-O)-methyltransferase (274 aa).

Residues R165, L195, 218–220 (GSE), 238–240 (IPM), and 247–252 (LNVSVS) each bind S-adenosyl-L-methionine.

The protein belongs to the class IV-like SAM-binding methyltransferase superfamily. RNA methyltransferase TsnR/AvirB family. In terms of assembly, homodimer.

It carries out the reaction adenosine(1067) in 23S rRNA + S-adenosyl-L-methionine = 2'-O-methyladenosine(1067) in 23S rRNA + S-adenosyl-L-homocysteine + H(+). In terms of biological role, specifically methylates the adenosine-1067 in 23S ribosomal RNA. Confers resistance to antibiotic nosiheptide. In Streptomyces actuosus, this protein is 23S rRNA (adenosine(1067)-2'-O)-methyltransferase.